The following is a 656-amino-acid chain: Pyoverdine export ATP-binding/permease protein PvdT (656 aa).

One can recognise an ABC transporter domain in the interval 6–245 (IDLRAIRKSY…SANPAALQAV (240 aa)). 43 to 50 (GASGSGKS) is an ATP binding site. Helical transmembrane passes span 284-304 (ALTL…LAVG), 538-558 (IAAI…LMTV), 589-609 (LSVV…AALL), and 619-639 (VPAV…FGFM).

It belongs to the ABC transporter superfamily. Macrolide exporter (TC 3.A.1.122) family. Part of the tripartite efflux system PvdRT-OpmQ, which is composed of an inner membrane component with both ATPase and permease domains, PvdT, a periplasmic membrane fusion protein, PvdR, and an outer membrane component, OpmQ.

It localises to the cell inner membrane. Functionally, part of the tripartite efflux system PvdRT-OpmQ required for the secretion into the extracellular milieu of the siderophore pyoverdine (PVD), which is involved in iron acquisition. This subunit binds PVD and drives its secretion by hydrolyzing ATP. The system is responsible for export of newly synthesized PVD after the final steps of biosynthesis have taken place in the periplasm. It is also responsible for recycling of PVD after internalization of ferri-PVD into the periplasm by the outer-membrane receptor FpvA and release of iron from PVD, thus making PVD available for new cycles of iron uptake. The sequence is that of Pyoverdine export ATP-binding/permease protein PvdT from Pseudomonas savastanoi pv. phaseolicola (strain 1448A / Race 6) (Pseudomonas syringae pv. phaseolicola (strain 1448A / Race 6)).